Reading from the N-terminus, the 97-residue chain is Protein RnfH (97 aa).

It belongs to the UPF0125 (RnfH) family.

This chain is Protein RnfH, found in Halorhodospira halophila (strain DSM 244 / SL1) (Ectothiorhodospira halophila (strain DSM 244 / SL1)).